Reading from the N-terminus, the 707-residue chain is Nucleolin (707 aa).

A disordered region spans residues 1-308 (MVKLAKAGKT…KVEGSEPTTP (308 aa)). 3 positions are modified to N6-acetyllysine: Lys9, Lys15, and Lys16. The span at 24 to 46 (VEEDSEDEEMSEDEDDSSGEEEV) shows a compositional bias: acidic residues. Phosphoserine is present on residues Ser28, Ser34, Ser40, and Ser41. Positions 56–92 (ATTTPAKKVVVSQTKKAAVPTPAKKAAVTPGKKAVAT) are enriched in low complexity. Repeat 1 spans residues 58–65 (TTPAKKVV). The 8 X 8 AA tandem repeats of X-T-P-X-K-K-X-X stretch occupies residues 58-135 (TTPAKKVVVS…GAATPAKGAK (78 aa)). Position 67 is a phosphoserine (Ser67). 4 positions are modified to phosphothreonine: Thr69, Thr76, Thr84, and Thr92. 3 consecutive repeat copies span residues 75–82 (PTPAKKAA), 83–90 (VTPGKKAV), and 91–98 (ATPAKKNI). Lys96 is subject to N6-acetyllysine. Phosphothreonine is present on Thr99. One copy of the 5; truncated repeat lies at 99-104 (TPAKVI). At Lys102 the chain carries N6-acetyllysine. Repeat 6 spans residues 105–112 (PTPGKKGA). Residue Thr106 is modified to Phosphothreonine. N6-acetyllysine occurs at positions 109 and 116. 2 tandem repeats follow at residues 120–127 (PTPGKKGA) and 128–135 (ATPAKGAK). A Phosphothreonine modification is found at Thr121. The span at 121–137 (TPGKKGAATPAKGAKNG) shows a compositional bias: low complexity. The residue at position 124 (Lys124) is an N6-acetyllysine. 2 positions are modified to phosphoserine: Ser145 and Ser157. Over residues 145 to 170 (SDEDEDEEDEDDSDEDEDDEEEDEFE) the composition is skewed to acidic residues. The segment covering 179-188 (PAKAAPAAPA) has biased composition (low complexity). A phosphoserine mark is found at Ser189 and Ser212. Residues 189-217 (SEDEEDDEDEDDEEDDDEEEEDDSEEEVM) show a composition bias toward acidic residues. A Phosphothreonine modification is found at Thr220. Residues 241–273 (EEEDDEEEDEDDEDEDDEEEDDEDDDEEEEEEE) are compositionally biased toward acidic residues. Residues 286–302 (MTKQKEAPEAKKQKVEG) are compositionally biased toward basic and acidic residues. Residue Lys299 forms a Glycyl lysine isopeptide (Lys-Gly) (interchain with G-Cter in SUMO1); alternate linkage. A Glycyl lysine isopeptide (Lys-Gly) (interchain with G-Cter in SUMO2); alternate cross-link involves residue Lys299. Position 303 is a phosphoserine (Ser303). RRM domains follow at residues 309 to 385 (FNLF…KPKG) and 395 to 468 (RTLL…YTGE). Lys320 is modified (N6-acetyllysine). A Glycyl lysine isopeptide (Lys-Gly) (interchain with G-Cter in SUMO1); alternate cross-link involves residue Lys326. A Glycyl lysine isopeptide (Lys-Gly) (interchain with G-Cter in SUMO2); alternate cross-link involves residue Lys326. Lys350 is subject to N6-acetyllysine. The residue at position 358 (Ser358) is a Phosphoserine. Thr369 is subject to Phosphothreonine. A Glycyl lysine isopeptide (Lys-Gly) (interchain with G-Cter in SUMO2) cross-link involves residue Lys372. Lys379 is covalently cross-linked (Glycyl lysine isopeptide (Lys-Gly) (interchain with G-Cter in SUMO2); alternate). Lys379 is modified (N6-acetyllysine; alternate). The residue at position 400 (Lys400) is an N6-acetyllysine. Ser403 is subject to Phosphoserine. Thr407 carries the phosphothreonine modification. N6-acetyllysine occurs at positions 429 and 446. 2 positions are modified to phosphoserine: Ser460 and Ser462. N6-acetyllysine occurs at positions 469 and 478. RRM domains follow at residues 487–561 (KTLV…LQGS) and 569–644 (KTLF…WAKP). Lys514 is covalently cross-linked (Glycyl lysine isopeptide (Lys-Gly) (interchain with G-Cter in SUMO2); alternate). Lys514 is modified (N6-acetyllysine; alternate). N6-acetyllysine occurs at positions 522 and 569. Residue Lys574 forms a Glycyl lysine isopeptide (Lys-Gly) (interchain with G-Cter in SUMO2); alternate linkage. The residue at position 574 (Lys574) is an N6-acetyllysine; alternate. Phosphoserine is present on Ser577. Lys586 is covalently cross-linked (Glycyl lysine isopeptide (Lys-Gly) (interchain with G-Cter in SUMO1); alternate). Lys586 participates in a covalent cross-link: Glycyl lysine isopeptide (Lys-Gly) (interchain with G-Cter in SUMO2); alternate. A phosphoserine mark is found at Ser588 and Ser616. Residue Lys621 forms a Glycyl lysine isopeptide (Lys-Gly) (interchain with G-Cter in SUMO2) linkage. The tract at residues 639-707 (LDWAKPKGEG…KPQGKKTKFE (69 aa)) is disordered. An N6-acetyllysine modification is found at Lys643. Gly residues predominate over residues 647–696 (EGGFGGRGGGRGGFGGRGGGRGGRGGFGGRGRGGFGGRGGFRGGRGGGGD). Asymmetric dimethylarginine is present on residues Arg653, Arg657, Arg663, Arg667, Arg670, Arg676, Arg678, Arg684, and Arg688. Asymmetric dimethylarginine; alternate is present on Arg691. Arg691 is subject to Omega-N-methylarginine; alternate.

Identified in a IGF2BP1-dependent mRNP granule complex containing untranslated mRNAs. Component of the SWAP complex that consists of NPM1, NCL/nucleolin, PARP1 and SWAP70. Component of a complex which is at least composed of HTATSF1/Tat-SF1, the P-TEFb complex components CDK9 and CCNT1, RNA polymerase II, SUPT5H, and NCL/nucleolin. Interacts with AICDA. Interacts with APTX. Interacts with C1QBP. Interacts with ERBB4. Interacts (via C-terminus) with FMR1 isoform 6 (via N-terminus). Interacts with GZF1; this interaction is important for nucleolar localization of GZF1. Interacts with NSUN2. Interacts with NVL. Interacts (via N-terminus domain) with SETX. Interacts (via RRM1 and C-terminal RRM4/Arg/Gly-rich domains) with TERT; the interaction is important for nucleolar localization of TERT. Interacts with WDR46. Interacts with ZFP36. Interacts with LRRC34. Interacts with RRP1B. Interacts with HNRNPU; this interaction occurs during mitosis. Interacts with RIOK1; RIOK1 recruits NCL to PRMT5 for symmetrically methylation. Interacts with ZBTB7B. Interacts with MDK; this interaction promotes NCL clustering and lateral movements of this complex into lipid rafts leading to MDK internalization. Interacts with HDGF. Interacts with ALKBH2. Interacts with IGFBP5; this interaction is necessary for IGFBP5 localization to the nucleus. Interacts with DDX24 (when ubiquitinated); this interaction may be important during ribosome biogenesis. Post-translationally, some glutamate residues are glycylated by TTLL8. This modification occurs exclusively on glutamate residues and results in a glycine chain on the gamma-carboxyl group. In terms of processing, symmetrically methylated by PRMT5. As to expression, expressed in B-cells that have been induced to switch to various Ig isotypes.

Its subcellular location is the nucleus. It localises to the nucleolus. It is found in the cytoplasm. In terms of biological role, nucleolin is the major nucleolar protein of growing eukaryotic cells. It is found associated with intranucleolar chromatin and pre-ribosomal particles. It induces chromatin decondensation by binding to histone H1. It is thought to play a role in pre-rRNA transcription and ribosome assembly. May play a role in the process of transcriptional elongation. Binds RNA oligonucleotides with 5'-UUAGGG-3' repeats more tightly than the telomeric single-stranded DNA 5'-TTAGGG-3' repeats. This Mus musculus (Mouse) protein is Nucleolin (Ncl).